A 149-amino-acid chain; its full sequence is Putative pre-16S rRNA nuclease (149 aa).

This sequence belongs to the YqgF nuclease family.

The protein localises to the cytoplasm. Its function is as follows. Could be a nuclease involved in processing of the 5'-end of pre-16S rRNA. The sequence is that of Putative pre-16S rRNA nuclease from Cupriavidus metallidurans (strain ATCC 43123 / DSM 2839 / NBRC 102507 / CH34) (Ralstonia metallidurans).